Consider the following 430-residue polypeptide: Adenylosuccinate synthetase (430 aa).

GTP is bound by residues 13-19 (GDEGKGK) and 41-43 (GHT). Residue D14 is the Proton acceptor of the active site. Positions 14 and 41 each coordinate Mg(2+). Residues 14-17 (DEGK), 39-42 (NAGH), T130, R144, Q225, T240, and R304 each bind IMP. The active-site Proton donor is the H42. 300-306 (STTGRAR) serves as a coordination point for substrate. Residues R306, 332 to 334 (KLD), and 414 to 416 (STG) each bind GTP.

The protein belongs to the adenylosuccinate synthetase family. As to quaternary structure, homodimer. It depends on Mg(2+) as a cofactor.

Its subcellular location is the cytoplasm. It catalyses the reaction IMP + L-aspartate + GTP = N(6)-(1,2-dicarboxyethyl)-AMP + GDP + phosphate + 2 H(+). Its pathway is purine metabolism; AMP biosynthesis via de novo pathway; AMP from IMP: step 1/2. In terms of biological role, plays an important role in the de novo pathway of purine nucleotide biosynthesis. Catalyzes the first committed step in the biosynthesis of AMP from IMP. This is Adenylosuccinate synthetase from Azotobacter vinelandii (strain DJ / ATCC BAA-1303).